Here is a 139-residue protein sequence, read N- to C-terminus: MWKEFREFAMKGNVVDLAVGVIIGAAFGGIVSSMVADIIMPIVGAVTGGLDFSNYFLPLSESVNASNLSDAKKQGAVLAWGNFLTLTLNFLIVAFVLFMVIKGMNRLKRKDEAASAEPPKPTREEELLTEIRDLLKAKV.

The next 3 membrane-spanning stretches (helical) occupy residues 19-39, 40-60, and 81-101; these read VGVI…ADII, MPIV…LPLS, and GNFL…FMVI.

Belongs to the MscL family. As to quaternary structure, homopentamer.

The protein resides in the cell inner membrane. Functionally, channel that opens in response to stretch forces in the membrane lipid bilayer. May participate in the regulation of osmotic pressure changes within the cell. This is Large-conductance mechanosensitive channel from Nitrobacter winogradskyi (strain ATCC 25391 / DSM 10237 / CIP 104748 / NCIMB 11846 / Nb-255).